Reading from the N-terminus, the 490-residue chain is Mitochondrial-processing peptidase subunit beta (490 aa).

Residues 1-46 (MAAAAVARAVLFSAARRRLCGFTERLLIGGAAGRSLYFGGNRLRST) constitute a mitochondrion transit peptide. H102 is a Zn(2+) binding site. The active-site Proton acceptor is E105. 2 residues coordinate Zn(2+): H106 and E182.

It belongs to the peptidase M16 family. Heterodimer of PMPCA (alpha) and PMPCB (beta) subunits, forming the mitochondrial processing protease (MPP) in which PMPCA is involved in substrate recognition and binding and PMPCB is the catalytic subunit. Zn(2+) serves as cofactor.

It localises to the mitochondrion matrix. The enzyme catalyses Release of N-terminal transit peptides from precursor proteins imported into the mitochondrion, typically with Arg in position P2.. Binding to PMPCA is required for catalytic activity. Catalytic subunit of the essential mitochondrial processing protease (MPP), which cleaves the mitochondrial sequence off newly imported precursors proteins. Preferentially, cleaves after an arginine at position P2. Required for PINK1 turnover by coupling PINK1 mitochondrial import and cleavage, which results in subsequent PINK1 proteolysis. This chain is Mitochondrial-processing peptidase subunit beta (PMPCB), found in Bos taurus (Bovine).